The following is a 1544-amino-acid chain: Arf-GAP with Rho-GAP domain, ANK repeat and PH domain-containing protein 3 (1544 aa).

Residues proline 4–glutamate 68 enclose the SAM domain. Disordered regions lie at residues threonine 64–serine 147 and glycine 167–glycine 194. Composition is skewed to pro residues over residues serine 82–lysine 97 and glutamate 130–proline 139. PH domains are found at residues threonine 287–lysine 379 and arginine 394–threonine 483. Positions glutamate 480–proline 611 constitute an Arf-GAP domain. The C4-type zinc-finger motif lies at cysteine 504–cysteine 527. A Rho-GAP domain is found at threonine 907–phenylalanine 1088. The Ras-associating domain maps to glycine 1117–leucine 1210. One can recognise a PH 3 domain in the interval glutamate 1223–histidine 1325. Residue threonine 1348 is modified to Phosphothreonine. 2 positions are modified to phosphotyrosine: tyrosine 1403 and tyrosine 1408. The segment at serine 1422–threonine 1544 is disordered. Polar residues predominate over residues proline 1438 to glycine 1457. Phosphoserine occurs at positions 1444 and 1480. 2 stretches are compositionally biased toward low complexity: residues glutamate 1482 to leucine 1492 and glycine 1502 to phenylalanine 1527.

As to quaternary structure, interacts (via SAM domain) with INPPL1/SHIP2. Post-translationally, tyrosine phosphorylated at a low basal level. PDGF treatment stimulates phosphorylation. Tyrosine phosphorylation is increased in cells that are in the process of becoming attached to a substrate and that start spreading and flattening.

It localises to the cytoplasm. Its subcellular location is the cytoskeleton. The protein localises to the cell membrane. The protein resides in the cell projection. It is found in the lamellipodium. It localises to the ruffle. Its function is as follows. Phosphatidylinositol 3,4,5-trisphosphate-dependent GTPase-activating protein that modulates actin cytoskeleton remodeling by regulating ARF and RHO family members. Is activated by phosphatidylinositol 3,4,5-trisphosphate (PtdIns(3,4,5)P3) binding. Can be activated by phosphatidylinositol 3,4-bisphosphate (PtdIns(3,4,5)P2) binding, albeit with lower efficiency. Acts on ARF6, RAC1, RHOA and CDC42. Plays a role in the internalization of anthrax toxin. The sequence is that of Arf-GAP with Rho-GAP domain, ANK repeat and PH domain-containing protein 3 (ARAP3) from Homo sapiens (Human).